Here is a 563-residue protein sequence, read N- to C-terminus: Septation ring formation regulator EzrA (563 aa).

The Extracellular segment spans residues 1-2 (ME). Residues 3–21 (LVIGLLVILLALFAAGYFF) form a helical membrane-spanning segment. Over 22-563 (RKKIYTEIDR…KKIKADQSAS (542 aa)) the chain is Cytoplasmic. 3 coiled-coil regions span residues 133 to 159 (EEKSRGEIEQVRERYSKARKNLLAYSH), 243 to 276 (KGYKLEHIQIEKELDTLTNQVKRAENALLEELDV), and 309 to 529 (SKMP…ERLF).

Belongs to the EzrA family.

It localises to the cell membrane. In terms of biological role, negative regulator of FtsZ ring formation; modulates the frequency and position of FtsZ ring formation. Inhibits FtsZ ring formation at polar sites. Interacts either with FtsZ or with one of its binding partners to promote depolymerization. The polypeptide is Septation ring formation regulator EzrA (Bacillus velezensis (strain DSM 23117 / BGSC 10A6 / LMG 26770 / FZB42) (Bacillus amyloliquefaciens subsp. plantarum)).